Here is a 56-residue protein sequence, read N- to C-terminus: Prokaryotic ubiquitin-like protein UBact (56 aa).

The tract at residues 1–56 (MPERIVKPMPQDPVTKPGDEGPRTPNVPKPDTERLLERMRRVDPRQAQRYRQRSGE) is disordered. Over residues 30 to 46 (PDTERLLERMRRVDPRQ) the composition is skewed to basic and acidic residues. An Isoglutamyl lysine isopeptide (Glu-Lys) (interchain with K-? in acceptor proteins) cross-link involves residue Glu56.

It belongs to the ubiquitin-like protein UBact family.

Functionally, may function as a protein modifier covalently attached to lysine residues of substrate proteins. This may serve to target the modified proteins for degradation by proteasomes. This Acetithermum autotrophicum protein is Prokaryotic ubiquitin-like protein UBact.